The following is a 213-amino-acid chain: Succinate dehydrogenase subunit 3-1, mitochondrial (213 aa).

The transit peptide at Met1–Phe105 directs the protein to the mitochondrion. Heme is bound at residue His130. A helical transmembrane segment spans residues Ile148–Leu165.

Component of complex II composed of eight subunits in plants: four classical SDH subunits SDH1, SDH2, SDH3 and SDH4 (a flavoprotein (FP), an iron-sulfur protein (IP), and a cytochrome b composed of a large and a small subunit.), as well as four subunits unknown in mitochondria from bacteria and heterotrophic eukaryotes. It depends on heme as a cofactor. In terms of tissue distribution, expressed in flowers, inflorescences and stems.

It is found in the mitochondrion inner membrane. The protein operates within carbohydrate metabolism; tricarboxylic acid cycle. Membrane-anchoring subunit of succinate dehydrogenase (SDH). The polypeptide is Succinate dehydrogenase subunit 3-1, mitochondrial (Arabidopsis thaliana (Mouse-ear cress)).